The chain runs to 363 residues: 3-isopropylmalate dehydrogenase (363 aa).

An NAD(+)-binding site is contributed by 78–91 (GPKWEHLPPDQQPE). 4 residues coordinate substrate: arginine 99, arginine 109, arginine 138, and aspartate 227. Positions 227, 251, and 255 each coordinate Mg(2+). An NAD(+)-binding site is contributed by 285-297 (GSAPDIAGKNIAN).

Belongs to the isocitrate and isopropylmalate dehydrogenases family. LeuB type 1 subfamily. As to quaternary structure, homodimer. The cofactor is Mg(2+). Mn(2+) serves as cofactor.

The protein localises to the cytoplasm. The catalysed reaction is (2R,3S)-3-isopropylmalate + NAD(+) = 4-methyl-2-oxopentanoate + CO2 + NADH. It participates in amino-acid biosynthesis; L-leucine biosynthesis; L-leucine from 3-methyl-2-oxobutanoate: step 3/4. In terms of biological role, catalyzes the oxidation of 3-carboxy-2-hydroxy-4-methylpentanoate (3-isopropylmalate) to 3-carboxy-4-methyl-2-oxopentanoate. The product decarboxylates to 4-methyl-2 oxopentanoate. The polypeptide is 3-isopropylmalate dehydrogenase (Shigella flexneri).